The sequence spans 76 residues: Conopeptide X11.1 (76 aa).

The first 20 residues, 1-20 (MMKLSVSFLLLLMLLPFITG), serve as a signal peptide directing secretion. Positions 21–39 (EENSDSDVLKSGAAVRQGR) are excised as a propeptide. 4 disulfide bridges follow: Cys-42-Cys-56, Cys-49-Cys-61, Cys-55-Cys-66, and Cys-60-Cys-73.

As to expression, expressed by the venom duct.

The protein resides in the secreted. Antimicrobial peptide that potently inhibits growth of Mycobacterium tuberculosis (H37Rv strain) (MIC=3 uM). This is Conopeptide X11.1 from Conasprella ximenes (Interrupted cone).